The following is a 552-amino-acid chain: Chaperonin GroEL (552 aa).

ATP-binding positions include Thr29–Pro32, Lys50, Asp86–Thr90, Gly420, and Asp501.

It belongs to the chaperonin (HSP60) family. In terms of assembly, forms a cylinder of 14 subunits composed of two heptameric rings stacked back-to-back. Interacts with the co-chaperonin GroES.

Its subcellular location is the cytoplasm. It carries out the reaction ATP + H2O + a folded polypeptide = ADP + phosphate + an unfolded polypeptide.. Functionally, together with its co-chaperonin GroES, plays an essential role in assisting protein folding. The GroEL-GroES system forms a nano-cage that allows encapsulation of the non-native substrate proteins and provides a physical environment optimized to promote and accelerate protein folding. This Wolbachia pipientis subsp. Culex pipiens (strain wPip) protein is Chaperonin GroEL.